We begin with the raw amino-acid sequence, 122 residues long: Protein U68 (122 aa).

Belongs to the herpesviridae UL96 family.

The polypeptide is Protein U68 (Elephas maximus (Indian elephant)).